The sequence spans 431 residues: Serine/threonine-protein kinase Sgk1 (431 aa).

The necessary for localization to the mitochondria stretch occupies residues 1–60 (MTVKTEAAKGTLTYSRMRGMVAILIAFMKQRRMGLNDFIQKIANNSYACKHPEVQSILKI). Residues 66-92 (PELMNANPSPPPSPSQQINLGPSSNPH) form a disordered region. Ser-74 is subject to Phosphoserine. A Phosphoserine; by MAPK7 modification is found at Ser-78. Over residues 81–91 (QQINLGPSSNP) the composition is skewed to polar residues. The Protein kinase domain occupies 98–355 (FHFLKVIGKG…FMEIKSHVFF (258 aa)). Residues 104-112 (IGKGSFGKV) and Lys-127 each bind ATP. Positions 131–141 (KKAILKKKEEK) match the Nuclear localization signal motif. Catalysis depends on Asp-222, which acts as the Proton acceptor. Thr-256 is subject to Phosphothreonine; by PDPK1. The AGC-kinase C-terminal domain occupies 356-431 (SLINWDDLIN…SYAPPTDSFL (76 aa)). Thr-369 carries the post-translational modification Phosphothreonine; by PKA. A phosphoserine mark is found at Ser-397, Ser-401, and Ser-422.

The protein belongs to the protein kinase superfamily. AGC Ser/Thr protein kinase family. In terms of assembly, homodimer; disulfide-linked. Forms a trimeric complex with FBXW7 and NOTCH1. Interacts with MAPK3/ERK1, MAPK1/ERK2, MAP2K1/MEK1, MAP2K2/MEK2, NEDD4, NEDD4L, MAPT/TAU, MAPK7, CREB1, SLC9A3R2/NHERF2 and KCNJ1/ROMK1. Associates with the mammalian target of rapamycin complex 2 (mTORC2) via an interaction with MAPKAP1/SIN1. In terms of processing, regulated by phosphorylation. Activated by phosphorylation on Ser-422 by mTORC2, transforming it into a substrate for PDPK1 which phosphorylates it on Thr-256. Phosphorylation on Ser-397 and Ser-401 are also essential for its activity. Phosphorylation on Ser-78 by MAPK7 is required for growth factor-induced cell cycle progression. Ubiquitinated by NEDD4L; which promotes proteasomal degradation. Ubiquitinated by SYVN1 at the endoplasmic reticulum; which promotes rapid proteasomal degradation and maintains a high turnover rate in resting cells.

It is found in the cytoplasm. Its subcellular location is the nucleus. It localises to the endoplasmic reticulum membrane. The protein localises to the cell membrane. The protein resides in the mitochondrion. The catalysed reaction is L-seryl-[protein] + ATP = O-phospho-L-seryl-[protein] + ADP + H(+). It carries out the reaction L-threonyl-[protein] + ATP = O-phospho-L-threonyl-[protein] + ADP + H(+). Two specific sites, one in the kinase domain (Thr-256) and the other in the C-terminal regulatory region (Ser-422), need to be phosphorylated for its full activation. Phosphorylation at Ser-397 and Ser-401 are also essential for its activity. Activated by WNK1, WNK2, WNK3 and WNK4; which promote phosphorylation by mTORC2. In terms of biological role, serine/threonine-protein kinase which is involved in the regulation of a wide variety of ion channels, membrane transporters, cellular enzymes, transcription factors, neuronal excitability, cell growth, proliferation, survival, migration and apoptosis. Plays an important role in cellular stress response. Contributes to regulation of renal Na(+) retention, renal K(+) elimination, salt appetite, gastric acid secretion, intestinal Na(+)/H(+) exchange and nutrient transport, insulin-dependent salt sensitivity of blood pressure, salt sensitivity of peripheral glucose uptake, cardiac repolarization and memory consolidation. Up-regulates Na(+) channels: SCNN1A/ENAC, SCN5A and ASIC1/ACCN2, K(+) channels: KCNJ1/ROMK1, KCNA1-5, KCNQ1-5 and KCNE1, epithelial Ca(2+) channels: TRPV5 and TRPV6, chloride channels: BSND, CLCN2 and CFTR, glutamate transporters: SLC1A3/EAAT1, SLC1A2 /EAAT2, SLC1A1/EAAT3, SLC1A6/EAAT4 and SLC1A7/EAAT5, amino acid transporters: SLC1A5/ASCT2, SLC38A1/SN1 and SLC6A19, creatine transporter: SLC6A8, Na(+)/dicarboxylate cotransporter: SLC13A2/NADC1, Na(+)-dependent phosphate cotransporter: SLC34A2/NAPI-2B, glutamate receptor: GRIK2/GLUR6. Up-regulates carriers: SLC9A3/NHE3, SLC12A1/NKCC2, SLC12A3/NCC, SLC5A3/SMIT, SLC2A1/GLUT1, SLC5A1/SGLT1 and SLC15A2/PEPT2. Regulates enzymes: GSK3A/B, PMM2 and Na(+)/K(+) ATPase, and transcription factors: CTNNB1 and nuclear factor NF-kappa-B. Stimulates sodium transport into epithelial cells by enhancing the stability and expression of SCNN1A/ENAC. This is achieved by phosphorylating the NEDD4L ubiquitin E3 ligase, promoting its interaction with 14-3-3 proteins, thereby preventing it from binding to SCNN1A/ENAC and targeting it for degradation. Regulates store-operated Ca(+2) entry (SOCE) by stimulating ORAI1 and STIM1. Regulates KCNJ1/ROMK1 directly via its phosphorylation or indirectly via increased interaction with SLC9A3R2/NHERF2. Phosphorylates MDM2 and activates MDM2-dependent ubiquitination of p53/TP53. Phosphorylates MAPT/TAU and mediates microtubule depolymerization and neurite formation in hippocampal neurons. Phosphorylates SLC2A4/GLUT4 and up-regulates its activity. Phosphorylates APBB1/FE65 and promotes its localization to the nucleus. Phosphorylates MAPK1/ERK2 and activates it by enhancing its interaction with MAP2K1/MEK1 and MAP2K2/MEK2. Phosphorylates FBXW7 and plays an inhibitory role in the NOTCH1 signaling. Phosphorylates FOXO1 resulting in its relocalization from the nucleus to the cytoplasm. Phosphorylates FOXO3, promoting its exit from the nucleus and interference with FOXO3-dependent transcription. Phosphorylates BRAF and MAP3K3/MEKK3 and inhibits their activity. Phosphorylates SLC9A3/NHE3 in response to dexamethasone, resulting in its activation and increased localization at the cell membrane. Phosphorylates CREB1. Necessary for vascular remodeling during angiogenesis. This Macaca fascicularis (Crab-eating macaque) protein is Serine/threonine-protein kinase Sgk1 (SGK1).